The chain runs to 448 residues: Tubulin alpha chain, nucleomorph (448 aa).

GTP is bound by residues glutamine 11, glutamate 71, serine 140, glycine 144, threonine 145, threonine 179, asparagine 206, and asparagine 228. Glutamate 71 provides a ligand contact to Mg(2+). The active site involves glutamate 254.

This sequence belongs to the tubulin family. As to quaternary structure, dimer of alpha and beta chains. A typical microtubule is a hollow water-filled tube with an outer diameter of 25 nm and an inner diameter of 15 nM. Alpha-beta heterodimers associate head-to-tail to form protofilaments running lengthwise along the microtubule wall with the beta-tubulin subunit facing the microtubule plus end conferring a structural polarity. Microtubules usually have 13 protofilaments but different protofilament numbers can be found in some organisms and specialized cells. Requires Mg(2+) as cofactor.

It carries out the reaction GTP + H2O = GDP + phosphate + H(+). In terms of biological role, tubulin is the major constituent of microtubules, a cylinder consisting of laterally associated linear protofilaments composed of alpha- and beta-tubulin heterodimers. Microtubules grow by the addition of GTP-tubulin dimers to the microtubule end, where a stabilizing cap forms. Below the cap, tubulin dimers are in GDP-bound state, owing to GTPase activity of alpha-tubulin. This is Tubulin alpha chain, nucleomorph (tubA) from Guillardia theta (Cryptophyte).